Consider the following 704-residue polypeptide: Elongation factor G (704 aa).

In terms of domain architecture, tr-type G spans 8–290 (EKYRNIGICA…GVVRYLPAPN (283 aa)). Residues 17–24 (AHVDAGKT), 88–92 (DTPGH), and 142–145 (NKMD) contribute to the GTP site.

It belongs to the TRAFAC class translation factor GTPase superfamily. Classic translation factor GTPase family. EF-G/EF-2 subfamily.

It is found in the cytoplasm. Catalyzes the GTP-dependent ribosomal translocation step during translation elongation. During this step, the ribosome changes from the pre-translocational (PRE) to the post-translocational (POST) state as the newly formed A-site-bound peptidyl-tRNA and P-site-bound deacylated tRNA move to the P and E sites, respectively. Catalyzes the coordinated movement of the two tRNA molecules, the mRNA and conformational changes in the ribosome. The chain is Elongation factor G from Francisella tularensis subsp. tularensis (strain FSC 198).